Consider the following 271-residue polypeptide: NADPH-dependent 7-cyano-7-deazaguanine reductase (271 aa).

79 to 81 contacts substrate; sequence IES. 81 to 82 lines the NADPH pocket; that stretch reads SK. The Thioimide intermediate role is filled by Cys178. Asp185 (proton donor) is an active-site residue. Residue 217–218 participates in substrate binding; sequence HE. 246-247 contacts NADPH; that stretch reads RG.

This sequence belongs to the GTP cyclohydrolase I family. QueF type 2 subfamily. As to quaternary structure, homodimer.

The protein localises to the cytoplasm. It catalyses the reaction 7-aminomethyl-7-carbaguanine + 2 NADP(+) = 7-cyano-7-deazaguanine + 2 NADPH + 3 H(+). It participates in tRNA modification; tRNA-queuosine biosynthesis. Functionally, catalyzes the NADPH-dependent reduction of 7-cyano-7-deazaguanine (preQ0) to 7-aminomethyl-7-deazaguanine (preQ1). This Acinetobacter baylyi (strain ATCC 33305 / BD413 / ADP1) protein is NADPH-dependent 7-cyano-7-deazaguanine reductase.